The following is a 169-amino-acid chain: 6,7-dimethyl-8-ribityllumazine synthase (169 aa).

5-amino-6-(D-ribitylamino)uracil is bound by residues phenylalanine 24, 58–60 (ALE), and 82–84 (AVV). 87–88 (ET) provides a ligand contact to (2S)-2-hydroxy-3-oxobutyl phosphate. Histidine 90 (proton donor) is an active-site residue. A 5-amino-6-(D-ribitylamino)uracil-binding site is contributed by asparagine 115. Position 129 (arginine 129) interacts with (2S)-2-hydroxy-3-oxobutyl phosphate.

This sequence belongs to the DMRL synthase family.

The enzyme catalyses (2S)-2-hydroxy-3-oxobutyl phosphate + 5-amino-6-(D-ribitylamino)uracil = 6,7-dimethyl-8-(1-D-ribityl)lumazine + phosphate + 2 H2O + H(+). Its pathway is cofactor biosynthesis; riboflavin biosynthesis; riboflavin from 2-hydroxy-3-oxobutyl phosphate and 5-amino-6-(D-ribitylamino)uracil: step 1/2. Its function is as follows. Catalyzes the formation of 6,7-dimethyl-8-ribityllumazine by condensation of 5-amino-6-(D-ribitylamino)uracil with 3,4-dihydroxy-2-butanone 4-phosphate. This is the penultimate step in the biosynthesis of riboflavin. The protein is 6,7-dimethyl-8-ribityllumazine synthase of Cupriavidus metallidurans (strain ATCC 43123 / DSM 2839 / NBRC 102507 / CH34) (Ralstonia metallidurans).